The following is a 213-amino-acid chain: MAVLSAPGLRGFRILGLRSSVGPAVQARGVHQSVATDGPSSTQPALPKARAVAPKPSSRGEYVVAKLDDLVNWARRSSLWPMTFGLACCAVEMMHMAAPRYDMDRFGVVFRASPRQSDVMIVAGTLTNKMAPALRKVYDQMPEPRYVVSMGSCANGGGYYHYSYSVVRGCDRIVPVDIYIPGCPPTAEALLYGILQLQRKIKRERRLQIWYRR.

A mitochondrion-targeting transit peptide spans 1-38 (MAVLSAPGLRGFRILGLRSSVGPAVQARGVHQSVATDG). Residues 31-53 (HQSVATDGPSSTQPALPKARAVA) are disordered. Residues 33–44 (SVATDGPSSTQP) show a composition bias toward polar residues. [4Fe-4S] cluster-binding residues include Cys88 and Cys89. Arg111 bears the Hydroxyarginine mark. [4Fe-4S] cluster-binding residues include Cys153 and Cys183.

It belongs to the complex I 20 kDa subunit family. In terms of assembly, core subunit of respiratory chain NADH dehydrogenase (Complex I) which is composed of 45 different subunits. This is a component of the iron-sulfur (IP) fragment of the enzyme. It depends on [4Fe-4S] cluster as a cofactor. In terms of processing, hydroxylated at Arg-111 by NDUFAF5 early in the pathway of assembly of complex I, before the formation of the juncture between peripheral and membrane arms.

The protein localises to the mitochondrion inner membrane. The enzyme catalyses a ubiquinone + NADH + 5 H(+)(in) = a ubiquinol + NAD(+) + 4 H(+)(out). Core subunit of the mitochondrial membrane respiratory chain NADH dehydrogenase (Complex I) which catalyzes electron transfer from NADH through the respiratory chain, using ubiquinone as an electron acceptor. Essential for the catalytic activity of complex I. The polypeptide is NADH dehydrogenase [ubiquinone] iron-sulfur protein 7, mitochondrial (NDUFS7) (Homo sapiens (Human)).